The chain runs to 293 residues: Protease HtpX (293 aa).

The next 2 helical transmembrane spans lie at 2–22 (FRIL…SVTL) and 38–58 (LTSL…ISLF). Histidine 145 provides a ligand contact to Zn(2+). The active site involves glutamate 146. Histidine 149 serves as a coordination point for Zn(2+). Helical transmembrane passes span 156 to 176 (VTLA…ARII) and 193 to 213 (IGFF…ASII). Position 222 (glutamate 222) interacts with Zn(2+).

The protein belongs to the peptidase M48B family. Zn(2+) serves as cofactor.

It is found in the cell inner membrane. This is Protease HtpX from Hahella chejuensis (strain KCTC 2396).